A 905-amino-acid chain; its full sequence is Alanine--tRNA ligase (905 aa).

Positions 582, 586, 687, and 691 each coordinate Zn(2+).

It belongs to the class-II aminoacyl-tRNA synthetase family. The cofactor is Zn(2+).

The protein localises to the cytoplasm. It catalyses the reaction tRNA(Ala) + L-alanine + ATP = L-alanyl-tRNA(Ala) + AMP + diphosphate. In terms of biological role, catalyzes the attachment of alanine to tRNA(Ala) in a two-step reaction: alanine is first activated by ATP to form Ala-AMP and then transferred to the acceptor end of tRNA(Ala). Also edits incorrectly charged Ser-tRNA(Ala) and Gly-tRNA(Ala) via its editing domain. This is Alanine--tRNA ligase from Mycoplasma mobile (strain ATCC 43663 / 163K / NCTC 11711) (Mesomycoplasma mobile).